Reading from the N-terminus, the 383-residue chain is Histidine decarboxylase (383 aa).

Histidine 120 contributes to the substrate binding site. Lysine 233 is modified (N6-(pyridoxal phosphate)lysine).

The protein belongs to the group II decarboxylase family. As to quaternary structure, homotetramer. It depends on pyridoxal 5'-phosphate as a cofactor.

The enzyme catalyses L-histidine + H(+) = histamine + CO2. The protein is Histidine decarboxylase of Acinetobacter baumannii (strain ACICU).